Here is a 213-residue protein sequence, read N- to C-terminus: Endoplasmic reticulum vesicle protein 25 (213 aa).

Positions 1–20 (MILRIPSLLYLFTLLTAVYA) are cleaved as a signal peptide. Over 21-181 (VKFDLTSDRN…TNESTNQRVK (161 aa)) the chain is Lumenal. A GOLD domain is found at 33–122 (PSIIWNFASA…VRSVELDVDI (90 aa)). A helical membrane pass occupies residues 182–202 (VFSVLIICCTIGLGVWQLLHL). Residues 203 to 213 (RSFFKRKYLID) lie on the Cytoplasmic side of the membrane.

Belongs to the EMP24/GP25L family.

It localises to the endoplasmic reticulum membrane. The protein resides in the golgi apparatus membrane. In terms of biological role, constituent of COPII-coated endoplasmic reticulum-derived transport vesicles. Required for efficient transport of a subset of secretory proteins to the Golgi. Facilitates retrograde transport from the Golgi to the endoplasmic reticulum. This Cryptococcus neoformans var. neoformans serotype D (strain B-3501A) (Filobasidiella neoformans) protein is Endoplasmic reticulum vesicle protein 25 (ERV25).